The sequence spans 133 residues: Large ribosomal subunit protein uL16 (133 aa).

The protein belongs to the universal ribosomal protein uL16 family. Part of the 50S ribosomal subunit.

Functionally, binds 23S rRNA and is also seen to make contacts with the A and possibly P site tRNAs. The chain is Large ribosomal subunit protein uL16 from Blochmanniella floridana.